A 347-amino-acid chain; its full sequence is N-acetyl-gamma-glutamyl-phosphate reductase (347 aa).

Residue C152 is part of the active site.

Belongs to the NAGSA dehydrogenase family. Type 1 subfamily.

The protein localises to the cytoplasm. The enzyme catalyses N-acetyl-L-glutamate 5-semialdehyde + phosphate + NADP(+) = N-acetyl-L-glutamyl 5-phosphate + NADPH + H(+). It participates in amino-acid biosynthesis; L-arginine biosynthesis; N(2)-acetyl-L-ornithine from L-glutamate: step 3/4. Catalyzes the NADPH-dependent reduction of N-acetyl-5-glutamyl phosphate to yield N-acetyl-L-glutamate 5-semialdehyde. The chain is N-acetyl-gamma-glutamyl-phosphate reductase from Neisseria meningitidis serogroup C (strain 053442).